The chain runs to 110 residues: MKFVLLFGVLLVTLFSYSSAEMLDDFDQADEDELLSLIEKEEARKDCIPKHHECTSNKHGCCKGHLFKYKCQCTTVVTQSGEETERCFCGTPPHCKAAELVVGFGKKIFG.

An N-terminal signal peptide occupies residues M1–A20. Residues E21 to R44 constitute a propeptide that is removed on maturation. Disulfide bonds link C47/C62, C54/C71, C61/C89, and C73/C87.

Belongs to the neurotoxin 19 (CSTX) family. 03 subfamily. In terms of tissue distribution, expressed by the venom gland.

The protein localises to the secreted. This chain is U1-lycotoxin-Ls1bb, found in Lycosa singoriensis (Wolf spider).